Here is a 470-residue protein sequence, read N- to C-terminus: 3-isopropylmalate dehydratase large subunit (470 aa).

Cys-351, Cys-411, and Cys-414 together coordinate [4Fe-4S] cluster.

Belongs to the aconitase/IPM isomerase family. LeuC type 1 subfamily. Heterodimer of LeuC and LeuD. It depends on [4Fe-4S] cluster as a cofactor.

The catalysed reaction is (2R,3S)-3-isopropylmalate = (2S)-2-isopropylmalate. The protein operates within amino-acid biosynthesis; L-leucine biosynthesis; L-leucine from 3-methyl-2-oxobutanoate: step 2/4. Its function is as follows. Catalyzes the isomerization between 2-isopropylmalate and 3-isopropylmalate, via the formation of 2-isopropylmaleate. The sequence is that of 3-isopropylmalate dehydratase large subunit from Shewanella frigidimarina (strain NCIMB 400).